A 461-amino-acid polypeptide reads, in one-letter code: Polycomb group protein FIE1 (461 aa).

Over residues 1–11 (MPPSKARRKRS) the composition is skewed to basic residues. A disordered region spans residues 1–56 (MPPSKARRKRSLRDITATVATGTVANSKPGSSSTNEGKQQDKKKEGPQEPDIPPLP). Over residues 18–37 (TVATGTVANSKPGSSSTNEG) the composition is skewed to polar residues. The span at 38–47 (KQQDKKKEGP) shows a compositional bias: basic and acidic residues. WD repeat units follow at residues 143–186 (DKDE…LDKS), 189–229 (GHGG…CILV), 235–275 (GHRH…IYVE), 301–338 (VHSD…RRPG), 351–391 (PKCS…PVLI), and 398–437 (ECKS…ASSS). Residues 429–461 (EVDPAASSSKPDQAAAPAAGVGAGAGADADADA) are disordered. The segment covering 432–448 (PAASSSKPDQAAAPAAG) has biased composition (low complexity).

It belongs to the WD repeat ESC family. As to expression, specifically expressed in kernel starting from 6 days after pollination.

It localises to the nucleus. Functionally, polycomb group (PcG) protein. PcG proteins act by forming multiprotein complexes, which are required to maintain the transcriptionally repressive state of homeotic genes throughout development. PcG proteins are not required to initiate repression, but to maintain it during later stages of development. They probably act via the methylation of histones, rendering chromatin heritably changed in its expressibility. This Zea mays (Maize) protein is Polycomb group protein FIE1 (FIE1).